We begin with the raw amino-acid sequence, 488 residues long: Adenylosuccinate synthetase 1, chloroplastic (488 aa).

A chloroplast-targeting transit peptide spans 1–47 (MSLSTVNHAAAAAAAAAGPGKSFSAAAPAAPSVRLPRTRAPAAAAVS). Residues 75 to 81 (GDEGKGK) and 103 to 105 (GHT) contribute to the GTP site. Asp-76 functions as the Proton acceptor in the catalytic mechanism. The Mg(2+) site is built by Asp-76 and Gly-103. Residues 76–79 (DEGK), 101–104 (NAGH), Thr-193, Arg-207, Gln-287, Thr-302, and Arg-366 each bind IMP. His-104 serves as the catalytic Proton donor. 362-368 (TTTGRPR) serves as a coordination point for substrate. Residues Arg-368, 394 to 396 (KLD), and 477 to 479 (GVG) contribute to the GTP site.

Belongs to the adenylosuccinate synthetase family. Homodimer. The cofactor is Mg(2+).

It localises to the plastid. Its subcellular location is the chloroplast. It carries out the reaction IMP + L-aspartate + GTP = N(6)-(1,2-dicarboxyethyl)-AMP + GDP + phosphate + 2 H(+). It participates in purine metabolism; AMP biosynthesis via de novo pathway; AMP from IMP: step 1/2. Plays an important role in the de novo pathway and in the salvage pathway of purine nucleotide biosynthesis. Catalyzes the first committed step in the biosynthesis of AMP from IMP. The protein is Adenylosuccinate synthetase 1, chloroplastic of Oryza sativa subsp. japonica (Rice).